Reading from the N-terminus, the 33-residue chain is Toxin BcV (33 aa).

Cys6 and Cys30 are oxidised to a cystine.

The protein localises to the secreted. The protein resides in the nematocyst. Functionally, potently and reversibly blocks mammalian Kv11/KCNH/ERG voltage-gated potassium channels. Acts as a gating-modifier toxin that shifts the voltage-dependence of ERG activation in the positive direction and suppresses its current amplitudes elicited by strong depolarizing pulses that maximally activate the channels. The polypeptide is Toxin BcV (Bunodosoma caissarum (Sea anemone)).